We begin with the raw amino-acid sequence, 98 residues long: Aspartyl/glutamyl-tRNA(Asn/Gln) amidotransferase subunit C (98 aa).

It belongs to the GatC family. In terms of assembly, heterotrimer of A, B and C subunits.

It carries out the reaction L-glutamyl-tRNA(Gln) + L-glutamine + ATP + H2O = L-glutaminyl-tRNA(Gln) + L-glutamate + ADP + phosphate + H(+). The enzyme catalyses L-aspartyl-tRNA(Asn) + L-glutamine + ATP + H2O = L-asparaginyl-tRNA(Asn) + L-glutamate + ADP + phosphate + 2 H(+). In terms of biological role, allows the formation of correctly charged Asn-tRNA(Asn) or Gln-tRNA(Gln) through the transamidation of misacylated Asp-tRNA(Asn) or Glu-tRNA(Gln) in organisms which lack either or both of asparaginyl-tRNA or glutaminyl-tRNA synthetases. The reaction takes place in the presence of glutamine and ATP through an activated phospho-Asp-tRNA(Asn) or phospho-Glu-tRNA(Gln). The sequence is that of Aspartyl/glutamyl-tRNA(Asn/Gln) amidotransferase subunit C from Acidothermus cellulolyticus (strain ATCC 43068 / DSM 8971 / 11B).